Here is a 1382-residue protein sequence, read N- to C-terminus: Hepatocyte growth factor receptor (1382 aa).

Positions 1-24 (MKAPAVLAPGILVLLFTLVQKSYG) are cleaved as a signal peptide. Topologically, residues 25–935 (ECKEALVKSE…VQPDQNFTGL (911 aa)) are extracellular. The 490-residue stretch at 27 to 516 (KEALVKSEMN…TGKKITRIPL (490 aa)) folds into the Sema domain. The N-linked (GlcNAc...) asparagine glycan is linked to N45. 4 disulfide bridges follow: C95–C101, C98–C160, C133–C141, and C173–C176. Residue N106 is glycosylated (N-linked (GlcNAc...) asparagine). Residues N203 and N359 are each glycosylated (N-linked (GlcNAc...) asparagine). Cystine bridges form between C299–C364 and C386–C398. 2 N-linked (GlcNAc...) asparagine glycosylation sites follow: N400 and N406. 4 disulfides stabilise this stretch: C521–C539, C527–C562, C530–C546, and C542–C552. 3 IPT/TIG domains span residues 564–656 (PAIY…FSYV), 658–740 (PIIT…FSYQ), and 743–837 (PIVY…LIYV). T583 is a glycosylation site (O-linked (Man) threonine). N608 and N636 each carry an N-linked (GlcNAc...) asparagine glycan. T677 and T762 each carry an O-linked (Man) threonine glycan. Residues N786, N880, and N931 are each glycosylated (N-linked (GlcNAc...) asparagine). A helical transmembrane segment spans residues 936 to 956 (IAGVISISTIVLLLLGLFLWL). Over 957–1379 (KRKKQIKDLG…LSSQDNIDGE (423 aa)) the chain is Cytoplasmic. S967 is modified (phosphoserine). T978 carries the post-translational modification Phosphothreonine. S991, S998, and S1001 each carry phosphoserine. A Phosphotyrosine modification is found at Y1004. The region spanning 1079–1346 (VHFNEVIGRG…RISAIFSTFI (268 aa)) is the Protein kinase domain. Residues 1085–1093 (IGRGHFGCV) and K1111 contribute to the ATP site. D1205 acts as the Proton acceptor in catalysis. Residues 1213-1382 (LDEKFTVKVA…QDNIDGEGDT (170 aa)) form an interaction with RANBP9 region. Residue Y1231 is modified to Phosphotyrosine. A phosphotyrosine; by autocatalysis mark is found at Y1235 and Y1236. T1290 carries the phosphothreonine modification. The interaction with MUC20 stretch occupies residues 1321-1360 (WHPRAELRPSFSELVSRISAIFSTFIGEHYVHVNATYVNV). Y1350 and Y1357 each carry phosphotyrosine; by autocatalysis. Residue Y1366 is modified to Phosphotyrosine.

The protein belongs to the protein kinase superfamily. Tyr protein kinase family. In terms of assembly, heterodimer made of an alpha chain (50 kDa) and a beta chain (145 kDa) which are disulfide linked. Binds PLXNB1. Interacts when phosphorylated with downstream effectors including STAT3, PIK3R1, SRC, PCLG1, GRB2 and GAB1. Interacts with SPSB1, SPSB2 and SPSB4. Interacts with INPP5D/SHIP1. When phosphorylated at Tyr-1357, interacts with INPPL1/SHIP2. Interacts with RANBP9 and RANBP10, as well as SPSB1, SPSB2, SPSB3 and SPSB4. SPSB1 binding occurs in the presence and in the absence of HGF, however HGF treatment has a positive effect on this interaction. Interacts with MUC20; prevents interaction with GRB2 and suppresses hepatocyte growth factor-induced cell proliferation. Interacts with GRB10. Interacts with PTPN1 and PTPN2. Interacts with HSP90AA1 and HSP90AB1; the interaction suppresses MET kinase activity. Interacts with tensin TNS3. Interacts (when phosphorylated) with tensin TNS4 (via SH2 domain); the interaction increases MET protein stability by inhibiting MET endocytosis and subsequent lysosomal degradation. As to quaternary structure, (Microbial infection) Interacts with L.monocytogenes InlB. InlB probably dimerizes upon binding to MET, which encourages subsequent dimerization of MET. Autophosphorylated in response to ligand binding on Tyr-1235 and Tyr-1236 in the kinase domain leading to further phosphorylation of Tyr-1350 and Tyr-1357 in the C-terminal multifunctional docking site. Dephosphorylated by PTPRJ at Tyr-1350 and Tyr-1366. Dephosphorylated by PTPN1 and PTPN2. Post-translationally, ubiquitinated. Ubiquitination by CBL regulates the receptor stability and activity through proteasomal degradation. In terms of processing, (Microbial infection) Tyrosine phosphorylation is stimulated by L.monocytogenes InlB. O-mannosylation of IPT/TIG domains by TMEM260 is required for protein maturation. O-mannosylated residues are composed of single mannose glycans that are not elongated or modified.

The protein resides in the membrane. The enzyme catalyses L-tyrosyl-[protein] + ATP = O-phospho-L-tyrosyl-[protein] + ADP + H(+). Its activity is regulated as follows. In its inactive state, the C-terminal tail interacts with the catalytic domain and inhibits the kinase activity. Upon ligand binding, the C-terminal tail is displaced and becomes phosphorylated, thus increasing the kinase activity. Functionally, receptor tyrosine kinase that transduces signals from the extracellular matrix into the cytoplasm by binding to hepatocyte growth factor/HGF ligand. Regulates many physiological processes including proliferation, scattering, morphogenesis and survival. Ligand binding at the cell surface induces autophosphorylation of MET on its intracellular domain that provides docking sites for downstream signaling molecules. Following activation by ligand, interacts with the PI3-kinase subunit PIK3R1, PLCG1, SRC, GRB2, STAT3 or the adapter GAB1. Recruitment of these downstream effectors by MET leads to the activation of several signaling cascades including the RAS-ERK, PI3 kinase-AKT, or PLCgamma-PKC. The RAS-ERK activation is associated with the morphogenetic effects while PI3K/AKT coordinates prosurvival effects. During embryonic development, MET signaling plays a role in gastrulation, development and migration of muscles and neuronal precursors, angiogenesis and kidney formation. In adults, participates in wound healing as well as organ regeneration and tissue remodeling. Also promotes differentiation and proliferation of hematopoietic cells. (Microbial infection) Acts as a receptor for Listeria monocytogenes internalin InlB, mediating entry of the pathogen into cells. The sequence is that of Hepatocyte growth factor receptor (MET) from Canis lupus familiaris (Dog).